The primary structure comprises 251 residues: Elongator complex protein 6 (251 aa).

This sequence belongs to the ELP6 family. As to quaternary structure, component of the elongator complex composed of Elp1, Elp2, Elp3, Elp4, Elp5 and Elp6. The elongator complex associates with and stabilizes microtubules; efficient interaction requires the full complex. Interacts with InR/Insulin-like receptor; the interaction may stabilize Elp6.

Its subcellular location is the cytoplasm. The protein localises to the nucleus. It is found in the cytoskeleton. It localises to the spindle. The protein operates within tRNA modification; 5-methoxycarbonylmethyl-2-thiouridine-tRNA biosynthesis. Component of the elongator complex, which is required for multiple tRNA modifications, including mcm5U (5-methoxycarbonylmethyl uridine), mcm5s2U (5-methoxycarbonylmethyl-2-thiouridine), and ncm5U (5-carbamoylmethyl uridine). The elongator complex catalyzes formation of carboxymethyluridine in the wobble base at position 34 in tRNAs. Binding by the elongator complex stabilizes microtubules and promotes their growth. This induces central spindle asymmetry, promoting polarized signaling endosome trafficking during asymmetric cell division and cell fate assignation of sensory organ precursor cells. Required in germ line cells for microtubule organization involved in oocyte polarization and chromosome organization. Involved in InR-TOR (insulin-like receptor-target of rapamycin) signaling regulation of cellular metabolism, autophagy and apoptosis. The sequence is that of Elongator complex protein 6 from Drosophila melanogaster (Fruit fly).